A 1191-amino-acid polypeptide reads, in one-letter code: Puratrophin-1 (1191 aa).

Disordered regions lie at residues 1-152 and 707-728; these read MERP…DPVG and AGGGALPQASPTVPPPGSSDPR. Ser64 carries the phosphoserine modification. Positions 111–120 are enriched in polar residues; that stretch reads SHLSLAQGES. The 177-residue stretch at 732 to 908 folds into the DH domain; that stretch reads RLQLVLAEMV…HFQLRHGNDL (177 aa). One can recognise a PH domain in the interval 920-1027; it reads NLKEQGQLVR…WTADISHLLW (108 aa). Positions 1150 to 1176 are disordered; sequence SLTAEDSEISSQCPSASGSSGSDSSCV. The span at 1159 to 1176 shows a compositional bias: low complexity; sequence SSQCPSASGSSGSDSSCV.

Expressed in kidney, Leydig cells in the testis, epithelial cells in the prostate gland and Langerhans islet in the pancreas. Isoform 1 and isoform 3 are strongly expressed in Purkinje cells and to a lower extent in other neurons (at protein level). Widely expressed at low levels. More strongly expressed in testis and pancreas.

Possible role in intracellular signaling and cytoskeleton dynamics at the Golgi. This is Puratrophin-1 (PLEKHG4) from Homo sapiens (Human).